We begin with the raw amino-acid sequence, 138 residues long: MALLPDKEKLLRNFLRCANWEEKYLYIIELGQRLPELRDEDRSPQNSIQGCQNQVWIVMRQNAQGIIELQGDSDAAIVKGLIAVVFILYDQMTPQDIVNFDVRPWFEKMALTQHLTPSRSQGLEAMIRAIRAKAAALS.

Cys51 functions as the Cysteine persulfide intermediate in the catalytic mechanism.

This sequence belongs to the SufE family. Homodimer. Interacts with SufS.

It is found in the cytoplasm. The protein operates within cofactor biosynthesis; iron-sulfur cluster biosynthesis. Functionally, participates in cysteine desulfuration mediated by SufS. Cysteine desulfuration mobilizes sulfur from L-cysteine to yield L-alanine and constitutes an essential step in sulfur metabolism for biosynthesis of a variety of sulfur-containing biomolecules. Functions as a sulfur acceptor for SufS, by mediating the direct transfer of the sulfur atom from the S-sulfanylcysteine of SufS, an intermediate product of cysteine desulfuration process. This is Cysteine desulfuration protein SufE from Shigella boydii serotype 18 (strain CDC 3083-94 / BS512).